The primary structure comprises 551 residues: Sialic acid-binding Ig-like lectin 5 (551 aa).

Positions 1 to 16 (MLPLLLLPLLWGGSLQ) are cleaved as a signal peptide. Residues 17–441 (EKPVYELQVQ…LGTGVVPAAL (425 aa)) are Extracellular-facing. One can recognise an Ig-like V-type domain in the interval 19-136 (PVYELQVQKS…KYSYQQNKLN (118 aa)). 3 disulfides stabilise this stretch: Cys-36–Cys-170, Cys-41–Cys-101, and Cys-164–Cys-213. Asn-100 carries N-linked (GlcNAc...) asparagine glycosylation. Residues Arg-119, Lys-127, and Ser-129 each coordinate N-acetylneuraminate. The 84-residue stretch at 146–229 (PDIHFLEPLE…AQVTTERTVQ (84 aa)) folds into the Ig-like C2-type 1 domain. Residues 189-210 (DPETTRSSELTLTPRPEDHGTN) are disordered. N-linked (GlcNAc...) asparagine glycans are attached at residues Asn-210, Asn-231, and Asn-253. The region spanning 236–330 (PQTITIFRNG…GFLQIFLNLS (95 aa)) is the Ig-like C2-type 2 domain. Cys-269 and Cys-314 are disulfide-bonded. 4 N-linked (GlcNAc...) asparagine glycosylation sites follow: Asn-328, Asn-375, Asn-384, and Asn-393. A helical membrane pass occupies residues 442–462 (GGAGVMALLCICLCLIFFLIV). Topologically, residues 463-551 (KARRKQAAGR…TEYSEIKTSK (89 aa)) are cytoplasmic. Residues 469 to 551 (AAGRPEKMDD…TEYSEIKTSK (83 aa)) are disordered. The ITIM motif signature appears at 518-523 (LHYASL). Over residues 528-537 (MKSREPKDQE) the composition is skewed to basic and acidic residues. The short motif at 542–547 (TEYSEI) is the SLAM-like motif element.

The protein belongs to the immunoglobulin superfamily. SIGLEC (sialic acid binding Ig-like lectin) family. In terms of tissue distribution, expressed by monocytic/myeloid lineage cells. Found at high levels in peripheral blood leukocytes, spleen, bone marrow and at lower levels in lymph node, lung, appendix, placenta, pancreas and thymus. Expressed by monocytes and neutrophils but absent from leukemic cell lines representing early stages of myelomonocytic differentiation.

The protein resides in the membrane. In terms of biological role, putative adhesion molecule that mediates sialic-acid dependent binding to cells. Binds equally to alpha-2,3-linked and alpha-2,6-linked sialic acid. The sialic acid recognition site may be masked by cis interactions with sialic acids on the same cell surface. This Homo sapiens (Human) protein is Sialic acid-binding Ig-like lectin 5 (SIGLEC5).